A 54-amino-acid chain; its full sequence is Large ribosomal subunit protein bL32c (54 aa).

Over residues 1 to 25 the composition is skewed to basic residues; the sequence is MAVPKKRTSKAKKNSRKANWKRKAA. Residues 1-26 are disordered; it reads MAVPKKRTSKAKKNSRKANWKRKAAK.

It belongs to the bacterial ribosomal protein bL32 family.

It is found in the plastid. Its subcellular location is the chloroplast. In Thalassiosira pseudonana (Marine diatom), this protein is Large ribosomal subunit protein bL32c.